Reading from the N-terminus, the 222-residue chain is Triosephosphate isomerase (222 aa).

Residue 9-11 (NYK) participates in substrate binding. Catalysis depends on histidine 93, which acts as the Electrophile. Glutamate 141 functions as the Proton acceptor in the catalytic mechanism. Residues isoleucine 146, glycine 181, and 202–203 (AS) contribute to the substrate site.

This sequence belongs to the triosephosphate isomerase family. Homotetramer; dimer of dimers.

It localises to the cytoplasm. It carries out the reaction D-glyceraldehyde 3-phosphate = dihydroxyacetone phosphate. It participates in carbohydrate biosynthesis; gluconeogenesis. Its pathway is carbohydrate degradation; glycolysis; D-glyceraldehyde 3-phosphate from glycerone phosphate: step 1/1. Its function is as follows. Involved in the gluconeogenesis. Catalyzes stereospecifically the conversion of dihydroxyacetone phosphate (DHAP) to D-glyceraldehyde-3-phosphate (G3P). This Methanosarcina mazei (strain ATCC BAA-159 / DSM 3647 / Goe1 / Go1 / JCM 11833 / OCM 88) (Methanosarcina frisia) protein is Triosephosphate isomerase.